Consider the following 416-residue polypeptide: MKAVGLVVEYNPFHNGHLYHIKEAKSETRSEVAVAVMSGSFLQRGEPAIVSKWARTKMALASFADVVVELPYIFAVQKAETFAEGAVSILNELGCSSLFFGSEHGDIEAFLNTAAHTIEHEDRLNEEARKQIAFGLSYPQAMAKAFRSVTREGGNIVDLSKPNNILGFHYVKAIMQKQLSMKPETVKRRSSGYHDSTFPEADRIASATSIRKSIFETGSLADSRFYLPKTTVDELDEYARTFGMWHSPEDYFPFLKYSLHTMDTEELKGIYEVEEGLEHRVKKAIRKAGSFKEYMELLKTKRYTWTRLQRMNTHILTKTKKADVKRMLNETHPAYIRLLGMTKKGQAYLAEKKKSLSAPLITKTGSFSHPSLQLDIKAGQVYSAPLKEPVRTMLTEQEYSLSPIRYDEDSRIFLRK.

Residues 7-20 (VVEY…HLYH), G101, N163, and R188 contribute to the ATP site.

The protein belongs to the TmcAL family.

It localises to the cytoplasm. The enzyme catalyses cytidine(34) in elongator tRNA(Met) + acetate + ATP = N(4)-acetylcytidine(34) in elongator tRNA(Met) + AMP + diphosphate. In terms of biological role, catalyzes the formation of N(4)-acetylcytidine (ac(4)C) at the wobble position of elongator tRNA(Met), using acetate and ATP as substrates. First activates an acetate ion to form acetyladenylate (Ac-AMP) and then transfers the acetyl group to tRNA to form ac(4)C34. The polypeptide is tRNA(Met) cytidine acetate ligase (Bacillus licheniformis (strain ATCC 14580 / DSM 13 / JCM 2505 / CCUG 7422 / NBRC 12200 / NCIMB 9375 / NCTC 10341 / NRRL NRS-1264 / Gibson 46)).